We begin with the raw amino-acid sequence, 929 residues long: Leucine--tRNA ligase (929 aa).

The 'HIGH' region motif lies at Pro42–His52. The 'KMSKS' region motif lies at Lys614–Ser618. Lys617 is a binding site for ATP.

This sequence belongs to the class-I aminoacyl-tRNA synthetase family.

The protein resides in the cytoplasm. The catalysed reaction is tRNA(Leu) + L-leucine + ATP = L-leucyl-tRNA(Leu) + AMP + diphosphate. This chain is Leucine--tRNA ligase, found in Trichodesmium erythraeum (strain IMS101).